A 75-amino-acid polypeptide reads, in one-letter code: DNA-directed RNA polymerase subunit omega (75 aa).

Belongs to the RNA polymerase subunit omega family. In terms of assembly, in cyanobacteria the RNAP catalytic core is composed of 2 alpha, 1 beta, 1 beta', 1 gamma and 1 omega subunit. When a sigma factor is associated with the core the holoenzyme is formed, which can initiate transcription.

The catalysed reaction is RNA(n) + a ribonucleoside 5'-triphosphate = RNA(n+1) + diphosphate. In terms of biological role, promotes RNA polymerase assembly. Latches the N- and C-terminal regions of the beta' subunit thereby facilitating its interaction with the beta and alpha subunits. The polypeptide is DNA-directed RNA polymerase subunit omega (Synechococcus sp. (strain CC9311)).